The following is a 128-amino-acid chain: Large ribosomal subunit protein bL19 (128 aa).

The protein belongs to the bacterial ribosomal protein bL19 family.

In terms of biological role, this protein is located at the 30S-50S ribosomal subunit interface and may play a role in the structure and function of the aminoacyl-tRNA binding site. This is Large ribosomal subunit protein bL19 from Ralstonia nicotianae (strain ATCC BAA-1114 / GMI1000) (Ralstonia solanacearum).